Reading from the N-terminus, the 3461-residue chain is MATRRAGRSWEVSPTERRPSARPRNSAAEEAAASPPVLSLSHFCRSPFLCFGDVRLGASRTLPLALDNPNEEVAEVKIAHFPAAEQGFSISPRSFELQPKEKIIISVNWTPLKEGRVREIVTFLVNDILKHQAILLGNAEEKKKKKRSLWDTINKKKMSTSSSDKRNSYIQNVNTTFCVSQKADRVRSPLQACENLAMKEGCFLTENNSLSLEENKIPISPISPIFKECHGETSLPLSVRRSTTYTSLHACENGELLKVEGADGSEDFNFNEKVTSETSFSSIHNMSGQIEENSKLILTPTCCSTLNITQSQGNFLSPDSFVNNSHAANNEPEVATCLSLDTFRKDNSSPVHLESKTVHKTYRTILSPDSFINDNYGLNQDLEPESINPILSPNQFVKDNMAYICISQQTCKLSSLSNKNSQVSQSPQDQRTNGVLPCFRECQGSQSPEAIFEESRTLEMKSDCYSFTKNQPKFPVIQNISSYSHDKRTRRPILSATVTKSKSICSRENQTEANKPKAKRCLNSVAGEFEKPTDTQNEKSGFQSCLPVIDPVFSKSKSYKNAVIPSSKTALVARKRKSEGNKEDANVRVTVTEHTEVREIKRIHFSPVESKMATVKKTKKMITPISKHISYREKSNLRKKTDSLVYRTPHSKTNKRTKPVVAVAQSTLTFIKPLKTDIPRHPMPFAAKNMFYDERWKEKQEQGFTWWLNFILTPDDFTVKTNISEVNAATLLLGVESQHKISVARAPTKDEMSLRAYTARCRLNRLRRAACRLFTSENMVKAIKKLEIEIEARRLIVRKDRHLWKDVGERQKVLNWLLSYNPLWLRIGLETIYGELISLEDNSDVTGLAVFILNRLLWNPDIAAEYRHPSVPHLYRDGHEEALSKFTLKKLLLLVCFLDYAKISRLIDHDPCLFCKDAEFKTSKEILLAFSRDFLSGEGDLSRHLSFLGLPVNHVQTPFDEFDFAVTNLAVDLQCGVRLVRIMELLTRDWNLSKKLRIPAISRLQKMHNVDIVLQILRSRGIQLNDEHGNAILSKDIVDRHREKTLTLLWKIAFAFQVDISLNLDQLKEEIDFLKHTQSLKKTTSALSCHSDAIINKEKDKRNSGSFERYSESIKLLMDWVNAVCAFYNKKVENFTVSFSDGRVLCYLIHHYHPYYVPFDAICQRTTQTVECTQTGSVVLNSSSESDGSSLDLSLKALDHENTSELYKELLENEKRNFQLVRSAVRDLGGIPAMIHHSDMSNTIPDEKVVITYLSFLCARLLDLCKETRAARLIQTTWRKYKQKTDLKRHQERDKAARIIQSAVISFLSKQRLKKEINAALAIQKHWRRLLAQRKLLMLKKEKLEKVQNKSALVIQRYWRRYSTRKQFLKLKYYSVILQSRIRMILAVTSYKRYLWATVTIQRHWLAYLRRKRDQQRYEMLKSSCLIIQSVFRRWKQHKMRLQIKATIILQRAFREWHVRKRAKEEKSAVVIQSWYRMHKELRKYIHLRSCVVIIQTRFRCLQAQKSYKRRREAILTIQKFYRAHLKGKTERANYLQKRAAAIQLQAAFRGMKARNLHRQIRAACVFQSYWRMRRDRFRFLNLKKITIKLQAQVRMHQQLQKYKKIKKAALIIQIHLRASVLAKRALASYQKTRSAVIVLQSAYRGMQARRKFIHILTSIIKIQSYYRAYISRKKFLRLKHATVKLQSIVKMKQTRKQYLHLRAATLFIQQWYRSIKVAALKREEYVQMRESCIKLQAFVRGHLVRKQMRSQRKAAVSLQSYFRMRKMRQHYLEMYKAAVVIQNYYRAYKAQVSQRKNFLQVKRAVTCVQAAYRGYKVRQLIKQQSIAALKIQTAFRGYSKRKKYQYVLQSTIKIQTWYRTYRTVRDVRMQFLKTKAAVISLQSAYRGWKVRTQIRRELQAAVRIQSAFRMAQTQKQFRLFKTAALVIQQHLRAWSAGKKQRMEYTELRNAALMLQSTWKGKIVRRQIRKQHKCAVIIQSYYRMHVQQKKWDIMKKAARLIQMYYRAYRIGRRQRQLYLKTKAAIVIIQSAYRSMRVRKKIKEYNKAAVAIQSTYRAYKAKKNYATYRASAVLIQRWYRNIKIANRQRKEYLNLKKTAVKIQAVFRGIRVRRRIQHMHTAATFIKAMFKMHQAKVRYHKMRTAAVLIQVRYRAYCQGKIQRAKYLTILKAVTVLQASFRGVRVRQTLRKMQNAAIRIQSCYRRYRQQTYFNKLKKVTQTVQQRYRAVKERNVQFQRYNKLRHSAICIQAGFRGMKARRHLRMMHLAATLIQRRFRTLKMRRRFLSLRKTALWVQRKYRATVCAKHHLQQFLRLQKAVITLQSSYRGWVVRKKMQEMHRAATVIQAAFRMHRAHVRYQAVRQASVVIQQRHQANRAAKLQRQRYLRQRHSALILQAAFRSMKARRHLKMMHSSAVLIQSRFRGLVVRKRFVSLKKAAVFVQRRYRATTCARRHLHQFLKVQKAVITIQSSYRRLMAKKKVQAMHRAAALIQATYKMHRTYVTFQAWKHASILIQQHYRIYRAAKLQRENYVRQRHSALVIQAAYKGMKARQLLREKHRAAIIIQSTYRMYRQYLFYRKIQWATKVIQKIYRAKKRKALQHDALRKVAACVQADFQDMIIRKQIQEQHQAATVLQKHLKASKVRKHYLHFRAKVVFVQRRYRALSAVRTQAVICIQSSYRGFKVRKGIQRMHLAATLIQSLYRMHRAKLDYRAKKTAVVLIQYYYRSYVRVKTERKNFLALQKSVRIIQAAFRGMKVRQKLKNLSEAKMAAIEKRSAFCRHRTETPYEAVQSSALRIQKWHRASLVACSQEAECHSQGRAAVTIQKAFCKTATEILETQKHAALRIQSFLQMAVYRRRFVQQKRAAVTLQQYFRTWQARKQFLLYRKAASVLQNHHRGFLSAKPQREAYLHVRSSVIIIQARTRGFIQKRKFQKIKDSTIKIQAAWRSYKARKYLCKVKAACKIQAWYRSWKARKEYLAILKAVKVIQGCFYTKLERTRFLNMRASTIIIQRKWRAMLSGRIAHEHFLMIKRHQAACLIQANFRRYKGRQVFLRQKSAALTIQRYIRARKAGKCERIKYVELKKSTVVLQALVRGWLVRKRISEQRTKIRLLHFTAAAYCHLSALRIQRAYKLHMVMKNAKKQVNSVICVQRWFRTRLQQKRFAQKCHSVIKSQRELQEHMSQQNRAASVIQKAVRRFLLRKKKEKINNGITKIQALWRGYSWRKKNDGTKIKAIRLSLQLVNREIREENKLYKRTALALHCLLTYKHLSAILEALKHLEVVTRLSPLCCENMAQSGAVSKIFVLIRSCNRSVPCMEVIRYSVQVLLNVAKYEKTTAAVYHVENCIDTLLDLLQMYREKPGDKVADKGGSIFTKTCCLLAILLKTTNRASDVRSRSKVVDRIYSLYKLTARKHKMNTERILYTQKKNSSISIPFIPETPIRTRIVSRLKPDWVLRRDNMEEIT.

Residues 1–30 form a disordered region; sequence MATRRAGRSWEVSPTERRPSARPRNSAAEE. Ser279, Ser282, Ser367, Ser392, Ser426, and Ser606 each carry phosphoserine. The Calponin-homology (CH) 1 domain maps to 921-1057; it reads KTSKEILLAF…LLWKIAFAFQ (137 aa). The stretch at 1058 to 1077 forms a coiled coil; sequence VDISLNLDQLKEEIDFLKHT. Residue Ser1104 is modified to Phosphoserine. Residues 1111-1262 enclose the Calponin-homology (CH) 2 domain; that stretch reads SESIKLLMDW…YLSFLCARLL (152 aa). 42 IQ domains span residues 1267–1296, 1348–1379, 1488–1517, 1511–1540, 1538–1569, 1583–1614, 1633–1662, 1656–1685, 1729–1758, 1752–1783, 1775–1804, 1802–1831, 1825–1854, 1875–1904, 1898–1929, 1948–1979, 1971–2002, 2021–2050, 2044–2075, 2094–2125, 2117–2148, 2167–2198, 2190–2219, 2240–2271, 2313–2344, 2336–2367, 2386–2417, 2409–2440, 2459–2490, 2532–2563, 2666–2697, 2689–2720, 2739–2768, 2837–2866, 2860–2891, 2910–2939, 2933–2964, 2955–2986, 3030–3059, 3080–3111, 3182–3211, and 3205–3236; these read ETRAARLIQTTWRKYKQKTDLKRHQERDKA, QNKSALVIQRYWRRYSTRKQFLKLKYYSVILQ, LRSCVVIIQTRFRCLQAQKSYKRRREAILT, RREAILTIQKFYRAHLKGKTERANYLQKRA, KRAAAIQLQAAFRGMKARNLHRQIRAACVFQS, LKKITIKLQAQVRMHQQLQKYKKIKKAALIIQ, TRSAVIVLQSAYRGMQARRKFIHILTSIIK, ILTSIIKIQSYYRAYISRKKFLRLKHATVK, MRESCIKLQAFVRGHLVRKQMRSQRKAAVS, QRKAAVSLQSYFRMRKMRQHYLEMYKAAVVIQ, MYKAAVVIQNYYRAYKAQVSQRKNFLQVKR, VKRAVTCVQAAYRGYKVRQLIKQQSIAALK, QSIAALKIQTAFRGYSKRKKYQYVLQSTIK, TKAAVISLQSAYRGWKVRTQIRRELQAAVR, ELQAAVRIQSAFRMAQTQKQFRLFKTAALVIQ, LRNAALMLQSTWKGKIVRRQIRKQHKCAVIIQ, QHKCAVIIQSYYRMHVQQKKWDIMKKAARLIQ, TKAAIVIIQSAYRSMRVRKKIKEYNKAAVA, YNKAAVAIQSTYRAYKAKKNYATYRASAVLIQ, LKKTAVKIQAVFRGIRVRRRIQHMHTAATFIK, MHTAATFIKAMFKMHQAKVRYHKMRTAAVLIQ, ILKAVTVLQASFRGVRVRQTLRKMQNAAIRIQ, MQNAAIRIQSCYRRYRQQTYFNKLKKVTQT, LRHSAICIQAGFRGMKARRHLRMMHLAATLIQ, LQKAVITLQSSYRGWVVRKKMQEMHRAATVIQ, MHRAATVIQAAFRMHRAHVRYQAVRQASVVIQ, QRHSALILQAAFRSMKARRHLKMMHSSAVLIQ, MHSSAVLIQSRFRGLVVRKRFVSLKKAAVFVQ, VQKAVITIQSSYRRLMAKKKVQAMHRAAALIQ, QRHSALVIQAAYKGMKARQLLREKHRAAIIIQ, RTQAVICIQSSYRGFKVRKGIQRMHLAATLIQ, MHLAATLIQSLYRMHRAKLDYRAKKTAVVLIQ, LQKSVRIIQAAFRGMKVRQKLKNLSEAKMA, QKHAALRIQSFLQMAVYRRRFVQQKRAAVT, QKRAAVTLQQYFRTWQARKQFLLYRKAASVLQ, VRSSVIIIQARTRGFIQKRKFQKIKDSTIK, IKDSTIKIQAAWRSYKARKYLCKVKAACKIQA, KVKAACKIQAWYRSWKARKEYLAILKAVKVIQ, RHQAACLIQANFRRYKGRQVFLRQKSAALT, LKKSTVVLQALVRGWLVRKRISEQRTKIRLLH, QNRAASVIQKAVRRFLLRKKKEKINNGITK, and INNGITKIQALWRGYSWRKKNDGTKIKAIRLS.

The protein resides in the cytoplasm. The protein localises to the cytoskeleton. It localises to the spindle. It is found in the nucleus. Functionally, probable role in mitotic spindle regulation and coordination of mitotic processes. May have a preferential role in regulating neurogenesis. This Felis catus (Cat) protein is Abnormal spindle-like microcephaly-associated protein homolog (ASPM).